The sequence spans 179 residues: Endoribonuclease YbeY (179 aa).

Zn(2+) is bound by residues His-141, His-145, and His-151.

The protein belongs to the endoribonuclease YbeY family. The cofactor is Zn(2+).

It is found in the cytoplasm. In terms of biological role, single strand-specific metallo-endoribonuclease involved in late-stage 70S ribosome quality control and in maturation of the 3' terminus of the 16S rRNA. The sequence is that of Endoribonuclease YbeY from Synechocystis sp. (strain ATCC 27184 / PCC 6803 / Kazusa).